We begin with the raw amino-acid sequence, 671 residues long: Acetyl-coenzyme A synthetase (671 aa).

The interval M1–G21 is disordered. CoA contacts are provided by residues R221 to K224, T339, and N363. Residues G415–G417, D439–T444, D528, and R543 each bind ATP. S551 is a CoA binding site. R554 serves as a coordination point for ATP. Mg(2+) is bound by residues V565, H567, and V570. R611 lines the CoA pocket. K636 carries the post-translational modification N6-acetyllysine.

Belongs to the ATP-dependent AMP-binding enzyme family. It depends on Mg(2+) as a cofactor. In terms of processing, acetylated. Deacetylation by the SIR2-homolog deacetylase activates the enzyme.

The catalysed reaction is acetate + ATP + CoA = acetyl-CoA + AMP + diphosphate. In terms of biological role, catalyzes the conversion of acetate into acetyl-CoA (AcCoA), an essential intermediate at the junction of anabolic and catabolic pathways. AcsA undergoes a two-step reaction. In the first half reaction, AcsA combines acetate with ATP to form acetyl-adenylate (AcAMP) intermediate. In the second half reaction, it can then transfer the acetyl group from AcAMP to the sulfhydryl group of CoA, forming the product AcCoA. The polypeptide is Acetyl-coenzyme A synthetase (Rhodopirellula baltica (strain DSM 10527 / NCIMB 13988 / SH1)).